Consider the following 434-residue polypeptide: Enolase (434 aa).

Q163 serves as a coordination point for (2R)-2-phosphoglycerate. E205 functions as the Proton donor in the catalytic mechanism. Positions 242, 291, and 318 each coordinate Mg(2+). Residues K343, R372, S373, and K394 each contribute to the (2R)-2-phosphoglycerate site. The active-site Proton acceptor is K343.

Belongs to the enolase family. The cofactor is Mg(2+).

The protein localises to the cytoplasm. It is found in the secreted. The protein resides in the cell surface. It catalyses the reaction (2R)-2-phosphoglycerate = phosphoenolpyruvate + H2O. It participates in carbohydrate degradation; glycolysis; pyruvate from D-glyceraldehyde 3-phosphate: step 4/5. In terms of biological role, catalyzes the reversible conversion of 2-phosphoglycerate (2-PG) into phosphoenolpyruvate (PEP). It is essential for the degradation of carbohydrates via glycolysis. The protein is Enolase of Streptococcus intermedius.